Consider the following 295-residue polypeptide: uncharacterized protein (295 aa).

Residues 4-233 enclose the Sigma-54 factor interaction domain; that stretch reads IVVKSMAMEK…LQNTIERLVL (230 aa).

This is an uncharacterized protein from Pseudomonas sp. (strain NS671).